A 155-amino-acid chain; its full sequence is Photosystem I reaction center subunit XI (155 aa).

A run of 2 helical transmembrane segments spans residues 80–102 and 117–139; these read LISG…LVSF and GWSQ…AFFL.

This sequence belongs to the PsaL family.

The protein resides in the cellular thylakoid membrane. This Thermosynechococcus vestitus (strain NIES-2133 / IAM M-273 / BP-1) protein is Photosystem I reaction center subunit XI.